The sequence spans 481 residues: MSLRYESIESLSQMIQNKTIRPSELIEDTFVNIEKDDTVINSFLALDKEAALEKAKTMDNETPSGKLFGIPMGIKDNIVTKDVETTCASKILEGFNSVYDATVMNKLNAENGILVGKLNMDEFAMGGSTENSFYKKTVNPFDHKAVPGGSSGGSAAAVAASLVPFSLGSDTGGSIRQPASYCGVVGMKPTYGRVSRFGLVAFASSLDQIGPITRNVKDNATVLEVISGLDPHDSTSAPVDNVDFTSQIDKDIKGLRVAVPKEYLGEGVSEEVKASVQAAIKALEKMGATVEEVSLPNSKYGVATYYILSSSEASANLARFDGIRYGYQAEGAQNLEELYKKTRQEGFGDEVKRRIMLGTYALSSGYYDAYYKKAQKVRTLIKQDFERVFENYDIIVGPTAPTTAFDIGAQINDPLTMYANDILTIPINLAGLPSMSIPCGESNGRPIGLQLIGKPFDEKTLYNVAYNYEQIFNMHERYQSL.

Residues lysine 75 and serine 150 each act as charge relay system in the active site. Residue serine 174 is the Acyl-ester intermediate of the active site.

Belongs to the amidase family. GatA subfamily. Heterotrimer of A, B and C subunits.

It carries out the reaction L-glutamyl-tRNA(Gln) + L-glutamine + ATP + H2O = L-glutaminyl-tRNA(Gln) + L-glutamate + ADP + phosphate + H(+). Functionally, allows the formation of correctly charged Gln-tRNA(Gln) through the transamidation of misacylated Glu-tRNA(Gln) in organisms which lack glutaminyl-tRNA synthetase. The reaction takes place in the presence of glutamine and ATP through an activated gamma-phospho-Glu-tRNA(Gln). The sequence is that of Glutamyl-tRNA(Gln) amidotransferase subunit A from Macrococcus caseolyticus (strain JCSC5402) (Macrococcoides caseolyticum).